The chain runs to 262 residues: R3H domain-containing protein 4 (262 aa).

Disordered regions lie at residues 1-27 and 132-155; these read MVAL…PGCL and YLED…RRED. The span at 146-155 shows a compositional bias: basic and acidic residues; the sequence is GRGEDRRRED. The 64-residue stretch at 182–245 folds into the R3H domain; it reads METLESWEER…RRQMKVSNRH (64 aa).

The protein resides in the nucleus. The chain is R3H domain-containing protein 4 (R3hdm4) from Mus musculus (Mouse).